Here is a 404-residue protein sequence, read N- to C-terminus: Dihydroorotase (404 aa).

Zn(2+)-binding residues include His-57 and His-59. Substrate-binding positions include His-59–Arg-61 and Asn-91. Residues Lys-135, His-164, His-204, and Asp-272 each contribute to the Zn(2+) site. Lys-135 carries the N6-carboxylysine modification. The active site involves Asp-272. Residues His-276 and Ala-286–Gly-287 contribute to the substrate site.

Belongs to the metallo-dependent hydrolases superfamily. DHOase family. Class I DHOase subfamily. The cofactor is Zn(2+).

It carries out the reaction (S)-dihydroorotate + H2O = N-carbamoyl-L-aspartate + H(+). It participates in pyrimidine metabolism; UMP biosynthesis via de novo pathway; (S)-dihydroorotate from bicarbonate: step 3/3. Functionally, catalyzes the reversible cyclization of carbamoyl aspartate to dihydroorotate. In Pyrococcus abyssi (strain GE5 / Orsay), this protein is Dihydroorotase.